Here is a 102-residue protein sequence, read N- to C-terminus: Small ribosomal subunit protein uS10 (102 aa).

This sequence belongs to the universal ribosomal protein uS10 family. In terms of assembly, part of the 30S ribosomal subunit.

Its function is as follows. Involved in the binding of tRNA to the ribosomes. This chain is Small ribosomal subunit protein uS10, found in Paramagnetospirillum magneticum (strain ATCC 700264 / AMB-1) (Magnetospirillum magneticum).